Consider the following 816-residue polypeptide: Molybdenum cofactor sulfurase (816 aa).

The residue at position 273 (Lys-273) is an N6-(pyridoxal phosphate)lysine. Residue Cys-427 is part of the active site. Positions 647–812 (NSDSQSHSCI…IRVGEEIIPN (166 aa)) constitute an MOSC domain.

Belongs to the class-V pyridoxal-phosphate-dependent aminotransferase family. MOCOS subfamily. Requires pyridoxal 5'-phosphate as cofactor. Ubiquitously expressed.

The catalysed reaction is Mo-molybdopterin + L-cysteine + AH2 = thio-Mo-molybdopterin + L-alanine + A + H2O. Its pathway is cofactor biosynthesis; molybdopterin biosynthesis. In terms of biological role, sulfurates the molybdenum cofactor. Sulfation of molybdenum is essential for xanthine dehydrogenase (XDH) and aldehyde oxidase (ADO) enzymes in which molybdenum cofactor is liganded by 1 oxygen and 1 sulfur atom in active form. This chain is Molybdenum cofactor sulfurase (FLACCA), found in Solanum lycopersicum (Tomato).